The following is a 424-amino-acid chain: Zinc metalloproteinase-disintegrin-like brevilysin H2a (424 aa).

Gln-1 carries the post-translational modification Pyrrolidone carboxylic acid. The region spanning 9–207 (RYVKLAIVAD…YKPQCILNEP (199 aa)) is the Peptidase M12B domain. Residue Asn-69 is glycosylated (N-linked (GlcNAc...) asparagine). Residue Asp-96 participates in Ca(2+) binding. 3 disulfide bridges follow: Cys-120-Cys-202, Cys-164-Cys-186, and Cys-166-Cys-169. Zn(2+) is bound at residue His-145. The active site involves Glu-146. Zn(2+) is bound by residues His-149 and His-155. An N-linked (GlcNAc...) asparagine glycan is attached at Asn-185. Positions 202, 205, 217, 220, 222, 224, 227, and 230 each coordinate Ca(2+). One can recognise a Disintegrin domain in the interval 215-301 (PPVCGNELLE…DCPTDDLQRN (87 aa)). Cystine bridges form between Cys-218-Cys-247, Cys-229-Cys-242, Cys-231-Cys-237, Cys-241-Cys-264, Cys-255-Cys-261, Cys-260-Cys-286, Cys-273-Cys-293, Cys-280-Cys-312, Cys-305-Cys-317, Cys-324-Cys-374, Cys-339-Cys-385, Cys-352-Cys-362, Cys-369-Cys-411, and Cys-405-Cys-417. The short motif at 279–281 (DCD) is the D/ECD-tripeptide element. Positions 281, 284, and 296 each coordinate Ca(2+). Asn-331 carries N-linked (GlcNAc...) asparagine glycosylation.

Belongs to the venom metalloproteinase (M12B) family. P-III subfamily. P-IIIa sub-subfamily. As to quaternary structure, monomer. Requires Zn(2+) as cofactor. Glycosylated. Expressed by the venom gland.

The protein localises to the secreted. With respect to regulation, its proteolytic activity is inhibited by EDTA, TPEN, 1,10-phenanthroline, and some thiol compounds, but is enhanced by alkaline earth metal ions (Mg2+, Ca2+, Sr2+, and Ba2+). Its activity is not modulated by urea (4 M). In terms of biological role, non-hemorrhagic metalloproteinase that degrades fibrinogen. The alpha chain (FGA) is rapidly degraded, the beta chain (FGB) is degraded very slowly, while the gamma chain is left intact. Shows a prefential cleavage at X-Leu bonds. Cleaves insulin B chain at '29-His-|-Leu-30', '33-Ser-|-His-34', '38-Ala-|-Leu-39' and '40-Tyr-|-Leu-41' bonds. The chain is Zinc metalloproteinase-disintegrin-like brevilysin H2a from Gloydius brevicauda (Korean slamosa snake).